A 1022-amino-acid chain; its full sequence is Integrator complex subunit 4 (1022 aa).

1D-myo-inositol hexakisphosphate-binding residues include Thr-148 and Lys-184. The segment at 818 to 840 (KDEEEKPPVVETDMPMKESVSRD) is disordered.

This sequence belongs to the Integrator subunit 4 family. Belongs to the multiprotein complex Integrator, at least composed of IntS1, IntS2, IntS3, IntS4, omd/IntS5, IntS6, defl/IntS7, IntS8, IntS9, IntS10, IntS11, IntS12, asun/IntS13, IntS14 and IntS15. The core complex associates with protein phosphatase 2A subunits mts/PP2A and Pp2A-29B, to form the Integrator-PP2A (INTAC) complex. IntS4 is part of the RNA endonuclease subcomplex, composed of IntS4, IntS9, IntS11 and inositol hexakisphosphate (InsP6).

It is found in the nucleus. Its function is as follows. Component of the integrator complex, a multiprotein complex that terminates RNA polymerase II (Pol II) transcription in the promoter-proximal region of genes. The integrator complex provides a quality checkpoint during transcription elongation by driving premature transcription termination of transcripts that are unfavorably configured for transcriptional elongation: the complex terminates transcription by (1) catalyzing dephosphorylation of the C-terminal domain (CTD) of Pol II subunit Polr2A/Rbp1 and Spt5, and (2) degrading the exiting nascent RNA transcript via endonuclease activity. The integrator complex is also involved in the 3'-end processing of the U7 snRNA, and also the spliceosomal snRNAs U1, U2, U4 and U5. The chain is Integrator complex subunit 4 from Drosophila melanogaster (Fruit fly).